The sequence spans 344 residues: L-rhamnose-proton symporter (344 aa).

The next 10 membrane-spanning stretches (helical) occupy residues 4–24 (AITMGIFWHLIGAASAACFYA), 38–58 (WSVGGIVSWLILPWAISALLL), 68–88 (FNLSTLLPVFLFGAMWGIGNI), 101–121 (MGIGIAIGITLIVGTLMTPII), 137–157 (TLLGVFVALIGVGIVTRAGQL), 175–195 (LLLAVMCGIFSAGMSFAMNAA), 214–234 (LPSYVVIMGGGALVNLGFCFI), 259–279 (ILLSALGGLMWYLQFFFYAWG), 290–310 (MSWMLHMSFYVLCGGLVGLVL), and 321–341 (VAVLSLGCVVIIIAANIVGLG).

It belongs to the L-rhamnose transporter (TC 2.A.7.6) family.

It is found in the cell inner membrane. It catalyses the reaction L-rhamnopyranose(in) + H(+)(in) = L-rhamnopyranose(out) + H(+)(out). Uptake of L-rhamnose across the cytoplasmic membrane with the concomitant transport of protons into the cell (symport system). This is L-rhamnose-proton symporter from Salmonella gallinarum (strain 287/91 / NCTC 13346).